The primary structure comprises 378 residues: 2-aminoethylphosphonate--pyruvate transaminase 1 (378 aa).

An N6-(pyridoxal phosphate)lysine modification is found at lysine 194.

Belongs to the class-V pyridoxal-phosphate-dependent aminotransferase family. PhnW subfamily. As to quaternary structure, homodimer. Pyridoxal 5'-phosphate serves as cofactor.

It carries out the reaction (2-aminoethyl)phosphonate + pyruvate = phosphonoacetaldehyde + L-alanine. Functionally, involved in phosphonate degradation. The protein is 2-aminoethylphosphonate--pyruvate transaminase 1 of Cupriavidus pinatubonensis (strain JMP 134 / LMG 1197) (Cupriavidus necator (strain JMP 134)).